A 622-amino-acid chain; its full sequence is Mitochondrial distribution and morphology protein 34 (622 aa).

One can recognise an SMP-LTD domain in the interval 1–204 (MSFKVNWNSL…LPTLIHQLSL (204 aa)). Disordered regions lie at residues 362 to 399 (YSNK…PSEL) and 568 to 592 (FDGG…TRNE). The segment covering 370–384 (KPKRRRIKVHKKNKS) has biased composition (basic residues). Over residues 390 to 399 (TTTTSKPSEL) the composition is skewed to polar residues. Low complexity predominate over residues 571-583 (GKNNNTNDNNSKN).

Belongs to the MDM34 family. Component of the ER-mitochondria encounter structure (ERMES) or MDM complex, composed of MMM1, MDM10, MDM12 and MDM34.

Its subcellular location is the mitochondrion outer membrane. In terms of biological role, component of the ERMES/MDM complex, which serves as a molecular tether to connect the endoplasmic reticulum (ER) and mitochondria. Components of this complex are involved in the control of mitochondrial shape and protein biogenesis, and function in nonvesicular lipid trafficking between the ER and mitochondria. MDM34 is required for the interaction of the ER-resident membrane protein MMM1 and the outer mitochondrial membrane-resident beta-barrel protein MDM10. The polypeptide is Mitochondrial distribution and morphology protein 34 (Candida dubliniensis (strain CD36 / ATCC MYA-646 / CBS 7987 / NCPF 3949 / NRRL Y-17841) (Yeast)).